A 239-amino-acid chain; its full sequence is Fatty acid metabolism regulator protein (239 aa).

The HTH gntR-type domain occupies 6 to 74 (QSPAGFAEEY…HGKPTKINNF (69 aa)). The H-T-H motif DNA-binding region spans 34-53 (ERELSELIGVTRTTLREVLQ).

Homodimer.

Its subcellular location is the cytoplasm. Its function is as follows. Multifunctional regulator of fatty acid metabolism. The chain is Fatty acid metabolism regulator protein from Pectobacterium carotovorum subsp. carotovorum (strain PC1).